Consider the following 388-residue polypeptide: 8-amino-7-oxononanoate synthase (388 aa).

Arginine 23 is a substrate binding site. Position 110 to 111 (110 to 111 (GF)) interacts with pyridoxal 5'-phosphate. Histidine 135 is a binding site for substrate. Positions 181, 209, and 235 each coordinate pyridoxal 5'-phosphate. Lysine 238 carries the N6-(pyridoxal phosphate)lysine modification. Threonine 352 is a substrate binding site.

This sequence belongs to the class-II pyridoxal-phosphate-dependent aminotransferase family. BioF subfamily. As to quaternary structure, homodimer. Requires pyridoxal 5'-phosphate as cofactor.

The enzyme catalyses 6-carboxyhexanoyl-[ACP] + L-alanine + H(+) = (8S)-8-amino-7-oxononanoate + holo-[ACP] + CO2. Its pathway is cofactor biosynthesis; biotin biosynthesis. In terms of biological role, catalyzes the decarboxylative condensation of pimeloyl-[acyl-carrier protein] and L-alanine to produce 8-amino-7-oxononanoate (AON), [acyl-carrier protein], and carbon dioxide. This chain is 8-amino-7-oxononanoate synthase, found in Sodalis glossinidius (strain morsitans).